The chain runs to 245 residues: MRTLFIADLHLSEKHPQISHAFFEFLQNETENVDALYILGDLFEVWIGDDERTLLMNEVALKLSEYALKNNILLYYIHGNRDFMIGKKYAKQSSMQLLPEHCEINLYGKKILILHGDTLCLADKNYQKMRTLLHNPLIQLVFNLLPLFLRKKIGWKIRHASQSKKVYKNREVMDVTKDEVVRLMEKHHVQTLIHGHTHRVACHEMLVKGQAAQRYDVGDWRHNLSYVEVQKDKINLVIRPINFYN.

Mn(2+) contacts are provided by Asp-8, His-10, Asp-41, Asn-80, and His-115. Substrate is bound at residue 80–81; that stretch reads NR. Substrate is bound by residues Asp-123, Ser-161, Lys-165, Lys-168, and His-196. 2 residues coordinate Mn(2+): His-196 and His-198.

The protein belongs to the LpxH family. Mn(2+) is required as a cofactor.

The protein localises to the cell inner membrane. The catalysed reaction is UDP-2-N,3-O-bis[(3R)-3-hydroxytetradecanoyl]-alpha-D-glucosamine + H2O = 2-N,3-O-bis[(3R)-3-hydroxytetradecanoyl]-alpha-D-glucosaminyl 1-phosphate + UMP + 2 H(+). The protein operates within glycolipid biosynthesis; lipid IV(A) biosynthesis; lipid IV(A) from (3R)-3-hydroxytetradecanoyl-[acyl-carrier-protein] and UDP-N-acetyl-alpha-D-glucosamine: step 4/6. Its function is as follows. Hydrolyzes the pyrophosphate bond of UDP-2,3-diacylglucosamine to yield 2,3-diacylglucosamine 1-phosphate (lipid X) and UMP by catalyzing the attack of water at the alpha-P atom. Involved in the biosynthesis of lipid A, a phosphorylated glycolipid that anchors the lipopolysaccharide to the outer membrane of the cell. The polypeptide is UDP-2,3-diacylglucosamine hydrolase (Psychromonas ingrahamii (strain DSM 17664 / CCUG 51855 / 37)).